The sequence spans 285 residues: 4-diphosphocytidyl-2-C-methyl-D-erythritol kinase (285 aa).

Lysine 10 is a catalytic residue. 93-103 (PIGGGLGGGSS) is a binding site for ATP. Residue aspartate 135 is part of the active site.

Belongs to the GHMP kinase family. IspE subfamily.

The enzyme catalyses 4-CDP-2-C-methyl-D-erythritol + ATP = 4-CDP-2-C-methyl-D-erythritol 2-phosphate + ADP + H(+). The protein operates within isoprenoid biosynthesis; isopentenyl diphosphate biosynthesis via DXP pathway; isopentenyl diphosphate from 1-deoxy-D-xylulose 5-phosphate: step 3/6. In terms of biological role, catalyzes the phosphorylation of the position 2 hydroxy group of 4-diphosphocytidyl-2C-methyl-D-erythritol. This is 4-diphosphocytidyl-2-C-methyl-D-erythritol kinase from Ruthia magnifica subsp. Calyptogena magnifica.